A 271-amino-acid polypeptide reads, in one-letter code: Malonyl-[acyl-carrier protein] O-methyltransferase (271 aa).

Belongs to the methyltransferase superfamily.

The enzyme catalyses malonyl-[ACP] + S-adenosyl-L-methionine = malonyl-[ACP] methyl ester + S-adenosyl-L-homocysteine. It functions in the pathway cofactor biosynthesis; biotin biosynthesis. In terms of biological role, converts the free carboxyl group of a malonyl-thioester to its methyl ester by transfer of a methyl group from S-adenosyl-L-methionine (SAM). It allows to synthesize pimeloyl-ACP via the fatty acid synthetic pathway. The chain is Malonyl-[acyl-carrier protein] O-methyltransferase from Halalkalibacterium halodurans (strain ATCC BAA-125 / DSM 18197 / FERM 7344 / JCM 9153 / C-125) (Bacillus halodurans).